Reading from the N-terminus, the 369-residue chain is MASTPRTPAPERSPPPVPTPPPPLEDEPPPYLADGSPREEASFSSDGREGAPPKNPQLSPTHHAAPRLVPPPSSPARQDGQEQEGSANKAAAATAEPAREPLRQMATGLARPLSSQTSPATTNSPTPSASPTPSSPAPVANNSKRSGQSTPKRAETKLPLSSPAVAVHFDPVEEAVTSPLRLGKARLDQQQQQQHAAGAAESGASVVPGVAAAVAAVAERRELLLALRLATAVLSLAAFSVIASARTSGWAGDYYARHLQYRYAVAVNVIVFAYSVAQSLGKIRHLVSPRFTFRTMSSYYCSLFLDQVLAYLLMSASSAAASRNDLWVSRFGTDAFVRKITGALWLSFVAFLVLALNAVISXANLFSMV.

Residues 1–162 are disordered; the sequence is MASTPRTPAP…RAETKLPLSS (162 aa). The Cytoplasmic segment spans residues 1–222; it reads MASTPRTPAP…AVAAVAERRE (222 aa). Over residues 7-23 the composition is skewed to pro residues; that stretch reads TPAPERSPPPVPTPPPP. The span at 36 to 51 shows a compositional bias: basic and acidic residues; it reads SPREEASFSSDGREGA. Composition is skewed to low complexity over residues 87-96 and 114-127; these read ANKAAAATAE and SSQTSPATTNSPTP. The chain crosses the membrane as a helical span at residues 223 to 243; the sequence is LLLALRLATAVLSLAAFSVIA. Over 244-262 the chain is Extracellular; the sequence is SARTSGWAGDYYARHLQYR. Residues 263-283 form a helical membrane-spanning segment; sequence YAVAVNVIVFAYSVAQSLGKI. The Cytoplasmic portion of the chain corresponds to 284–300; it reads RHLVSPRFTFRTMSSYY. A helical transmembrane segment spans residues 301 to 321; the sequence is CSLFLDQVLAYLLMSASSAAA. Residues 322-339 lie on the Extracellular side of the membrane; sequence SRNDLWVSRFGTDAFVRK. The chain crosses the membrane as a helical span at residues 340–360; it reads ITGALWLSFVAFLVLALNAVI. Residues 361-369 lie on the Cytoplasmic side of the membrane; that stretch reads SXANLFSMV.

Belongs to the Casparian strip membrane proteins (CASP) family. Homodimer and heterodimers.

The protein resides in the cell membrane. The chain is CASP-like protein 4U1 from Zea mays (Maize).